The sequence spans 541 residues: Malate synthase (541 aa).

Residue Arg-169 is the Proton acceptor of the active site. The Proton donor role is filled by Asp-454.

This sequence belongs to the malate synthase family.

It is found in the cytoplasm. It catalyses the reaction glyoxylate + acetyl-CoA + H2O = (S)-malate + CoA + H(+). Its pathway is carbohydrate metabolism; glyoxylate cycle; (S)-malate from isocitrate: step 2/2. In Streptomyces clavuligerus, this protein is Malate synthase (aceB).